Reading from the N-terminus, the 534-residue chain is Allene oxide synthase 1, chloroplastic (534 aa).

Disordered regions lie at residues 1–31 and 43–71; these read MASTSLSLPSLKLQFPSHTSSSSRKNSSSYR and EIPPYISSPSQSPSSSSSPPVKQAKLPAQ. A chloroplast-targeting transit peptide spans 1–69; it reads MASTSLSLPS…SPPVKQAKLP (69 aa). Low complexity-rich tracts occupy residues 17-31 and 43-62; these read SHTSSSSRKNSSSYR and EIPPYISSPSQSPSSSSSPP. The heme b site is built by Lys149, His180, and Lys184. (13S)-hydroperoxy-(9Z,11E)-octadecadienoate-binding residues include Asn337 and Lys343. Asn337 is a binding site for (13S)-hydroperoxy-(9Z,11E,15Z)-octadecatrienoate. Lys485 and Cys487 together coordinate heme b.

It belongs to the cytochrome P450 family. Heme b serves as cofactor. Expressed in flowers. Detected in stems and roots, but not in leaves and fruits under non-inducing conditions.

It localises to the plastid. The protein localises to the chloroplast. It catalyses the reaction (13S)-hydroperoxy-(9Z,11E,15Z)-octadecatrienoate = (9Z,13S,15Z)-12,13-epoxyoctadeca-9,11,15-trienoate + H2O. The catalysed reaction is (13S)-hydroperoxy-(9Z,11E)-octadecadienoate = (9Z,13S)-12,13-epoxyoctadeca-9,11-dienoate + H2O. In terms of biological role, cytochrome P450 of the CYP74A subfamily involved in the biosynthesis of jasmonic acid from lipoxygenase-derived hydroperoxides of free fatty acids. Catalyzes the synthesis of unstable allene oxide, which is further converted spontaneously by hydrolysis or cyclization. Can use 13S-hydroperoxy-9(Z),11(E),15(Z)-octadecatrienoic acid (13-HPOT) and 13S-hydroperoxy-9(Z),11(E)-octadecadienoic acid (13-HPOD) as substrates. This is Allene oxide synthase 1, chloroplastic from Solanum lycopersicum (Tomato).